Consider the following 217-residue polypeptide: Large ribosomal subunit protein uL4c (217 aa).

The interval 51-85 (HRNRNAHTQTRGEVSGGGRKPWKQKGTGRARAGSN) is disordered.

Belongs to the universal ribosomal protein uL4 family. As to quaternary structure, part of the 50S ribosomal subunit.

It is found in the plastid. Its subcellular location is the chloroplast. Probably binds the 23S rRNA. The polypeptide is Large ribosomal subunit protein uL4c (rpl4) (Gracilaria tenuistipitata var. liui (Red alga)).